Consider the following 85-residue polypeptide: UPF0291 protein SSA_1878 (85 aa).

Residues 58–85 (GNDVTPEKLRQVQREKGLHGRSLDDPES) are disordered. Over residues 62-85 (TPEKLRQVQREKGLHGRSLDDPES) the composition is skewed to basic and acidic residues.

Belongs to the UPF0291 family.

It is found in the cytoplasm. The chain is UPF0291 protein SSA_1878 from Streptococcus sanguinis (strain SK36).